A 457-amino-acid chain; its full sequence is Putative adhesion G protein-coupled receptor E4P (457 aa).

A signal peptide spans 1-14 (MGSRFLLVLLSGAS). 6 cysteine pairs are disulfide-bonded: Cys-15-Cys-24, Cys-18-Cys-30, Cys-32-Cys-52, Cys-58-Cys-71, Cys-65-Cys-80, and Cys-82-Cys-103. Positions 15 to 53 (CPPCPKYASCHNSTHCTCEDGFRARSGRTYFHDSSEKCE) constitute an EGF-like 1 domain. Residues 16–191 (PPCPKYASCH…LAPKEDPVLT (176 aa)) are Extracellular-facing. N-linked (GlcNAc...) asparagine glycosylation occurs at Asn-26. An EGF-like 2; calcium-binding domain is found at 54-104 (DINECETGLAKCKYKAYCRNKVGGYICSCLVKYTLFNFLAGIIDYDHPDCY). 2 N-linked (GlcNAc...) asparagine glycosylation sites follow: Asn-106 and Asn-162. The GAIN-B domain maps to 134–186 (DKRTKHICVYWEGSEGGWSTEGCSHVHSNGSYTKCKCFHLSSFAVLVALAPKE). Intrachain disulfides connect Cys-141–Cys-168 and Cys-156–Cys-170. The segment at 141–186 (CVYWEGSEGGWSTEGCSHVHSNGSYTKCKCFHLSSFAVLVALAPKE) is GPS. The chain crosses the membrane as a helical span at residues 192–212 (VITQVGLTISLLCLFLAILTF). Topologically, residues 213–223 (LLCRPIQNTST) are cytoplasmic. A helical membrane pass occupies residues 224–244 (SLHLELSLCLFLAHLLFLTGI). Residue Asn-245 is glycosylated (N-linked (GlcNAc...) asparagine). At 245–250 (NRTEPE) the chain is on the extracellular side. A helical membrane pass occupies residues 251–271 (VLCSIIAGLLHFLYLACFTWM). At 272–299 (LLEGLHLFLTVRNLKVANYTSTGRFKKR) the chain is on the cytoplasmic side. Residues 300-320 (FMYPVGYGIPAVIIAVSAIVG) traverse the membrane as a helical segment. Topologically, residues 321–336 (PQNYGTFTCWLKLDKG) are extracellular. The chain crosses the membrane as a helical span at residues 337 to 357 (FIWSFMGPVAVIILINLVFYF). Over 358 to 384 (QVLWILRSKLSSLNKEVSTIQDTRVMT) the chain is Cytoplasmic. Residues 385 to 405 (FKAISQLFILGCSWGLGFFMV) traverse the membrane as a helical segment. At 406–413 (EEVGKTIG) the chain is on the extracellular side. The chain crosses the membrane as a helical span at residues 414 to 434 (SIIAYSFTIINTLQGVLLFVV). Residues 435-457 (HCLLNRQVRLIILSVISLVPKSN) are Cytoplasmic-facing.

This sequence belongs to the G-protein coupled receptor 2 family. Adhesion G-protein coupled receptor (ADGR) subfamily. As to quaternary structure, forms a heterodimer, consisting of a large extracellular region (alpha subunit) non-covalently linked to a seven-transmembrane moiety (beta subunit). Post-translationally, glycosylated. Proteolytically cleaved into 2 subunits, an extracellular alpha subunit and a seven-transmembrane subunit.

Its subcellular location is the cell membrane. The protein resides in the secreted. Its function is as follows. May mediate the cellular interaction between myeloid cells and B-cells. The sequence is that of Putative adhesion G protein-coupled receptor E4P from Homo sapiens (Human).